The primary structure comprises 248 residues: 2-C-methyl-D-erythritol 4-phosphate cytidylyltransferase (248 aa).

Belongs to the IspD/TarI cytidylyltransferase family. IspD subfamily.

The enzyme catalyses 2-C-methyl-D-erythritol 4-phosphate + CTP + H(+) = 4-CDP-2-C-methyl-D-erythritol + diphosphate. The protein operates within isoprenoid biosynthesis; isopentenyl diphosphate biosynthesis via DXP pathway; isopentenyl diphosphate from 1-deoxy-D-xylulose 5-phosphate: step 2/6. Functionally, catalyzes the formation of 4-diphosphocytidyl-2-C-methyl-D-erythritol from CTP and 2-C-methyl-D-erythritol 4-phosphate (MEP). This Corynebacterium efficiens (strain DSM 44549 / YS-314 / AJ 12310 / JCM 11189 / NBRC 100395) protein is 2-C-methyl-D-erythritol 4-phosphate cytidylyltransferase.